A 266-amino-acid chain; its full sequence is Undecaprenyl-diphosphatase (266 aa).

8 helical membrane passes run 1 to 21 (MNIF…FLPI), 43 to 63 (FDVV…QAMI), 83 to 103 (SKLA…GMIF), 114 to 134 (VEII…ASWF), 144 to 164 (TISW…LIPG), 186 to 206 (IQFA…LILI), 219 to 239 (LLAM…VFFI), and 245 to 265 (VGMM…FFFI).

This sequence belongs to the UppP family.

The protein resides in the cell inner membrane. The catalysed reaction is di-trans,octa-cis-undecaprenyl diphosphate + H2O = di-trans,octa-cis-undecaprenyl phosphate + phosphate + H(+). Its function is as follows. Catalyzes the dephosphorylation of undecaprenyl diphosphate (UPP). Confers resistance to bacitracin. This chain is Undecaprenyl-diphosphatase, found in Ruthia magnifica subsp. Calyptogena magnifica.